The following is a 378-amino-acid chain: Erythronate-4-phosphate dehydrogenase (378 aa).

2 residues coordinate substrate: S45 and T66. Positions 146 and 175 each coordinate NAD(+). Residue R208 is part of the active site. D232 provides a ligand contact to NAD(+). E237 is an active-site residue. Residue H254 is the Proton donor of the active site. NAD(+) is bound at residue G257. Y258 contacts substrate.

The protein belongs to the D-isomer specific 2-hydroxyacid dehydrogenase family. PdxB subfamily. Homodimer.

The protein localises to the cytoplasm. The catalysed reaction is 4-phospho-D-erythronate + NAD(+) = (R)-3-hydroxy-2-oxo-4-phosphooxybutanoate + NADH + H(+). It participates in cofactor biosynthesis; pyridoxine 5'-phosphate biosynthesis; pyridoxine 5'-phosphate from D-erythrose 4-phosphate: step 2/5. Catalyzes the oxidation of erythronate-4-phosphate to 3-hydroxy-2-oxo-4-phosphonooxybutanoate. In Salmonella agona (strain SL483), this protein is Erythronate-4-phosphate dehydrogenase.